Reading from the N-terminus, the 381-residue chain is Deoxyguanosinetriphosphate triphosphohydrolase-like protein (381 aa).

Positions 76–203 (RMTHTLEVAG…ADLSDEIAYT (128 aa)) constitute an HD domain.

This sequence belongs to the dGTPase family. Type 2 subfamily.

In Leptospira borgpetersenii serovar Hardjo-bovis (strain JB197), this protein is Deoxyguanosinetriphosphate triphosphohydrolase-like protein.